The primary structure comprises 624 residues: Chaperone protein DnaK (624 aa).

Position 174 is a phosphothreonine; by autocatalysis (threonine 174). Disordered regions lie at residues 470-504 (ITIK…KEEV) and 577-624 (NGGA…DPDK). Basic and acidic residues predominate over residues 481-504 (EEIKKMQKDAEEHAEEDKKRKEEV). Positions 577–605 (NGGAQGAAGQAGPQGPQNGGQPNNDNGSD) are enriched in low complexity. Residues 615–624 (GDFHKVDPDK) are compositionally biased toward basic and acidic residues.

The protein belongs to the heat shock protein 70 family.

In terms of biological role, acts as a chaperone. The sequence is that of Chaperone protein DnaK from Lactobacillus johnsonii (strain CNCM I-12250 / La1 / NCC 533).